The sequence spans 239 residues: Purine nucleoside phosphorylase DeoD-type (239 aa).

H5 contributes to the a purine D-ribonucleoside binding site. Residues G21, R25, R44, and 88-91 contribute to the phosphate site; that span reads RVGS. A purine D-ribonucleoside contacts are provided by residues 180-182 and 204-205; these read EME and SD. The active-site Proton donor is the D205.

It belongs to the PNP/UDP phosphorylase family. In terms of assembly, homohexamer; trimer of homodimers.

The catalysed reaction is a purine D-ribonucleoside + phosphate = a purine nucleobase + alpha-D-ribose 1-phosphate. The enzyme catalyses a purine 2'-deoxy-D-ribonucleoside + phosphate = a purine nucleobase + 2-deoxy-alpha-D-ribose 1-phosphate. Catalyzes the reversible phosphorolytic breakdown of the N-glycosidic bond in the beta-(deoxy)ribonucleoside molecules, with the formation of the corresponding free purine bases and pentose-1-phosphate. In Cronobacter sakazakii (strain ATCC BAA-894) (Enterobacter sakazakii), this protein is Purine nucleoside phosphorylase DeoD-type.